A 621-amino-acid polypeptide reads, in one-letter code: Elongation factor 4 (621 aa).

The region spanning 21–203 (DLIRNICIIA…AIVKRVPPPK (183 aa)) is the tr-type G domain. GTP contacts are provided by residues 33–38 (DHGKTT) and 150–153 (NKID).

Belongs to the TRAFAC class translation factor GTPase superfamily. Classic translation factor GTPase family. LepA subfamily.

It localises to the cell inner membrane. The catalysed reaction is GTP + H2O = GDP + phosphate + H(+). In terms of biological role, required for accurate and efficient protein synthesis under certain stress conditions. May act as a fidelity factor of the translation reaction, by catalyzing a one-codon backward translocation of tRNAs on improperly translocated ribosomes. Back-translocation proceeds from a post-translocation (POST) complex to a pre-translocation (PRE) complex, thus giving elongation factor G a second chance to translocate the tRNAs correctly. Binds to ribosomes in a GTP-dependent manner. This Thermotoga maritima (strain ATCC 43589 / DSM 3109 / JCM 10099 / NBRC 100826 / MSB8) protein is Elongation factor 4.